The following is a 397-amino-acid chain: HTH-type transcriptional regulator GalR (397 aa).

2 consecutive HTH lysR-type domains span residues 7–64 and 99–156; these read PNLM…MRLT and FQAR…LQPT. DNA-binding regions (H-T-H motif) lie at residues 24–43 and 116–135; these read VSRA…RAIA and MQTV…AALK.

This sequence belongs to the LysR transcriptional regulatory family.

In terms of biological role, transcriptional regulator for the galBCD and galTAP operons, encoding genes of the gallate degradation pathway. The polypeptide is HTH-type transcriptional regulator GalR (galR) (Pseudomonas putida (strain ATCC 47054 / DSM 6125 / CFBP 8728 / NCIMB 11950 / KT2440)).